The primary structure comprises 401 residues: Imidazolonepropionase (401 aa).

Residues histidine 66 and histidine 68 each contribute to the Fe(3+) site. Positions 66 and 68 each coordinate Zn(2+). Arginine 75, tyrosine 138, and histidine 171 together coordinate 4-imidazolone-5-propanoate. An N-formimidoyl-L-glutamate-binding site is contributed by tyrosine 138. Histidine 236 is a Fe(3+) binding site. Residue histidine 236 coordinates Zn(2+). Glutamine 239 is a binding site for 4-imidazolone-5-propanoate. A Fe(3+)-binding site is contributed by aspartate 311. Position 311 (aspartate 311) interacts with Zn(2+). Residues asparagine 313 and glycine 315 each contribute to the N-formimidoyl-L-glutamate site. A 4-imidazolone-5-propanoate-binding site is contributed by threonine 316.

Belongs to the metallo-dependent hydrolases superfamily. HutI family. Zn(2+) serves as cofactor. Fe(3+) is required as a cofactor.

It is found in the cytoplasm. It catalyses the reaction 4-imidazolone-5-propanoate + H2O = N-formimidoyl-L-glutamate. It functions in the pathway amino-acid degradation; L-histidine degradation into L-glutamate; N-formimidoyl-L-glutamate from L-histidine: step 3/3. Its function is as follows. Catalyzes the hydrolytic cleavage of the carbon-nitrogen bond in imidazolone-5-propanoate to yield N-formimidoyl-L-glutamate. It is the third step in the universal histidine degradation pathway. In Pseudomonas putida (Arthrobacter siderocapsulatus), this protein is Imidazolonepropionase.